The primary structure comprises 1382 residues: Hepatocyte growth factor receptor (1382 aa).

Residues 1–24 form the signal peptide; the sequence is MKASAVLAPGILVILFTLVQKSNC. Residues 25 to 933 are Extracellular-facing; sequence ECKEALVKSK…VIVQPDQNIT (909 aa). The Sema domain maps to 27–516; the sequence is KEALVKSKMN…TGKKITKIPL (490 aa). Asparagine 45 carries N-linked (GlcNAc...) asparagine glycosylation. Cystine bridges form between cysteine 95–cysteine 101, cysteine 98–cysteine 160, cysteine 133–cysteine 141, and cysteine 173–cysteine 176. Residue asparagine 106 is glycosylated (N-linked (GlcNAc...) asparagine). N-linked (GlcNAc...) asparagine glycans are attached at residues asparagine 203 and asparagine 359. 2 disulfides stabilise this stretch: cysteine 299-cysteine 364 and cysteine 386-cysteine 398. N-linked (GlcNAc...) asparagine glycosylation is found at asparagine 400 and asparagine 406. Disulfide bonds link cysteine 521-cysteine 539, cysteine 527-cysteine 562, cysteine 530-cysteine 546, and cysteine 542-cysteine 552. IPT/TIG domains lie at 564–656, 658–740, and 743–837; these read PTIY…FSYV, PIIT…FSYQ, and PIIY…LIYV. The O-linked (Man) threonine glycan is linked to threonine 583. N-linked (GlcNAc...) asparagine glycans are attached at residues asparagine 608 and asparagine 636. Threonine 677 and threonine 762 each carry an O-linked (Man) threonine glycan. 3 N-linked (GlcNAc...) asparagine glycosylation sites follow: asparagine 786, asparagine 880, and asparagine 931. Residues 934 to 956 form a helical membrane-spanning segment; that stretch reads EFIVGILSISGILLTLLGLLLWW. Over 957–1382 the chain is Cytoplasmic; sequence KKKKQIKDLG…QDNFDSEGNT (426 aa). Serine 967 carries the post-translational modification Phosphoserine. At threonine 978 the chain carries Phosphothreonine. Serine 991, serine 998, and serine 1001 each carry phosphoserine. Position 1004 is a phosphotyrosine (tyrosine 1004). The Protein kinase domain maps to 1079 to 1346; the sequence is VHFNEVIGRG…RISAIFSTFI (268 aa). ATP is bound by residues 1085–1093 and lysine 1111; that span reads IGRGHFGCV. Catalysis depends on aspartate 1205, which acts as the Proton acceptor. Positions 1213-1382 are interaction with RANBP9; sequence LDENFTVKVA…QDNFDSEGNT (170 aa). Tyrosine 1231 is subject to Phosphotyrosine. Tyrosine 1235 and tyrosine 1236 each carry phosphotyrosine; by autocatalysis. At threonine 1290 the chain carries Phosphothreonine. Positions 1321-1360 are interaction with MUC20; the sequence is WHPKAELRPSFSELVSRISAIFSTFIGEHYVHVNATYVNI. Residues tyrosine 1350 and tyrosine 1357 each carry the phosphotyrosine; by autocatalysis modification. Position 1366 is a phosphotyrosine (tyrosine 1366).

This sequence belongs to the protein kinase superfamily. Tyr protein kinase family. Heterodimer made of an alpha chain (50 kDa) and a beta chain (145 kDa) which are disulfide linked. Binds PLXNB1. Interacts when phosphorylated with downstream effectors including STAT3, PIK3R1, SRC, PCLG1, GRB2 and GAB1. Interacts with SPSB1, SPSB2 and SPSB4. Interacts with INPP5D/SHIP1. When phosphorylated at Tyr-1357, interacts with INPPL1/SHIP2. Interacts with RANBP9 and RANBP10, as well as SPSB1, SPSB2, SPSB3 and SPSB4. SPSB1 binding occurs in the presence and in the absence of HGF, however HGF treatment has a positive effect on this interaction. Interacts with MUC20; prevents interaction with GRB2 and suppresses hepatocyte growth factor-induced cell proliferation. Interacts with GRB10. Interacts with PTPN1 and PTPN2. Interacts with tensin TNS3. Interacts (when phosphorylated) with tensin TNS4 (via SH2 domain); the interaction increases MET protein stability by inhibiting MET endocytosis and subsequent lysosomal degradation. Post-translationally, autophosphorylated in response to ligand binding on Tyr-1235 and Tyr-1236 in the kinase domain leading to further phosphorylation of Tyr-1350 and Tyr-1357 in the C-terminal multifunctional docking site. Dephosphorylated by PTPRJ at Tyr-1350 and Tyr-1366. Dephosphorylated by PTPN1 and PTPN2. In terms of processing, ubiquitinated. Ubiquitination by CBL regulates the receptor stability and activity through proteasomal degradation. O-mannosylation of IPT/TIG domains by TMEM260 is required for protein maturation. O-mannosylated residues are composed of single mannose glycans that are not elongated or modified.

It is found in the membrane. It carries out the reaction L-tyrosyl-[protein] + ATP = O-phospho-L-tyrosyl-[protein] + ADP + H(+). Its activity is regulated as follows. In its inactive state, the C-terminal tail interacts with the catalytic domain and inhibits the kinase activity. Upon ligand binding, the C-terminal tail is displaced and becomes phosphorylated, thus increasing the kinase activity. Its function is as follows. Receptor tyrosine kinase that transduces signals from the extracellular matrix into the cytoplasm by binding to hepatocyte growth factor/HGF ligand. Regulates many physiological processes including proliferation, scattering, morphogenesis and survival. Ligand binding at the cell surface induces autophosphorylation of MET on its intracellular domain that provides docking sites for downstream signaling molecules. Following activation by ligand, interacts with the PI3-kinase subunit PIK3R1, PLCG1, SRC, GRB2, STAT3 or the adapter GAB1. Recruitment of these downstream effectors by MET leads to the activation of several signaling cascades including the RAS-ERK, PI3 kinase-AKT, or PLCgamma-PKC. The RAS-ERK activation is associated with the morphogenetic effects while PI3K/AKT coordinates prosurvival effects. During embryonic development, MET signaling plays a role in gastrulation, development and migration of muscles and neuronal precursors, angiogenesis and kidney formation. In adults, participates in wound healing as well as organ regeneration and tissue remodeling. Also promotes differentiation and proliferation of hematopoietic cells. The chain is Hepatocyte growth factor receptor (MET) from Atelerix albiventris (Middle-African hedgehog).